A 231-amino-acid chain; its full sequence is DNA mismatch repair protein MutH (231 aa).

This sequence belongs to the MutH family.

Its subcellular location is the cytoplasm. Its function is as follows. Sequence-specific endonuclease that cleaves unmethylated GATC sequences. It is involved in DNA mismatch repair. The sequence is that of DNA mismatch repair protein MutH from Klebsiella pneumoniae subsp. pneumoniae (strain ATCC 700721 / MGH 78578).